The chain runs to 486 residues: uncharacterized protein (486 aa).

Residues 7–28 traverse the membrane as a helical segment; sequence HVISIFETVGAYFINIFYNFLY. N73, N83, and N195 each carry an N-linked (GlcNAc...) asparagine; by host glycan. The stretch at 183-233 forms a coiled coil; it reads ELEETYARLSSYNRSLLYQIEELTSEKKSFLEELSTLRKKYEKRQSEYRRL. Residues 299 to 329 form a disordered region; it reads SQEVTSKSPNNYPVPQSRTIVNKPSDNYPVP. Positions 300–323 are enriched in polar residues; the sequence is QEVTSKSPNNYPVPQSRTIVNKPS. N461 is a glycosylation site (N-linked (GlcNAc...) asparagine; by host).

It belongs to the asfivirus B475L family.

The protein localises to the host membrane. This is an uncharacterized protein from Ornithodoros (relapsing fever ticks).